A 66-amino-acid polypeptide reads, in one-letter code: UPF0370 protein YpfN (66 aa).

A helical membrane pass occupies residues 4–24 (LAKYWWILVLVFLVGVLLNVI). Positions 39–66 (KPELPPHRDFNDKWDDEDGWPKKDQPKK) are disordered. Basic and acidic residues predominate over residues 42-66 (LPPHRDFNDKWDDEDGWPKKDQPKK).

The protein belongs to the UPF0370 family.

The protein resides in the cell membrane. This Salmonella paratyphi B (strain ATCC BAA-1250 / SPB7) protein is UPF0370 protein YpfN.